The chain runs to 149 residues: Thioredoxin-like protein 4B (149 aa).

It belongs to the DIM1 family. Homodimer. Interacts with the U5-102 kDa protein subunit of the spliceosome.

The protein localises to the nucleus. Functionally, essential role in pre-mRNA splicing. Required in cell cycle progression for S/G(2) transition. This Homo sapiens (Human) protein is Thioredoxin-like protein 4B (TXNL4B).